Consider the following 601-residue polypeptide: Amino-acid acetyltransferase, mitochondrial (601 aa).

In terms of domain architecture, N-acetyltransferase spans F401–K558.

It belongs to the acetyltransferase family.

It is found in the mitochondrion. It catalyses the reaction L-glutamate + acetyl-CoA = N-acetyl-L-glutamate + CoA + H(+). Its pathway is amino-acid biosynthesis; L-arginine biosynthesis; N(2)-acetyl-L-ornithine from L-glutamate: step 1/4. N-acetylglutamate synthase involved in arginine biosynthesis. In Lodderomyces elongisporus (strain ATCC 11503 / CBS 2605 / JCM 1781 / NBRC 1676 / NRRL YB-4239) (Yeast), this protein is Amino-acid acetyltransferase, mitochondrial (ARG2).